The chain runs to 759 residues: Subtilisin-like protease SBT3.16 (759 aa).

Positions 1–33 (MELSSLIVPNNKKHFVVVFIGLVLIFKIALITA) are cleaved as a signal peptide. Residues 34–119 (ANEKSQIYTV…VTRSKNMKLK (86 aa)) constitute a propeptide, activation peptide. The region spanning 41-118 (YTVHLGERQH…RVTRSKNMKL (78 aa)) is the Inhibitor I9 domain. Residues 124 to 608 (SDYLGLTSAA…GGLVNPVKVA (485 aa)) enclose the Peptidase S8 domain. The Charge relay system role is filled by D153. Residues N186 and N209 are each glycosylated (N-linked (GlcNAc...) asparagine). Catalysis depends on H229, which acts as the Charge relay system. Residue N371 is glycosylated (N-linked (GlcNAc...) asparagine). The active-site Charge relay system is S539. 2 N-linked (GlcNAc...) asparagine glycosylation sites follow: N632 and N711.

It belongs to the peptidase S8 family.

The protein resides in the secreted. In Arabidopsis thaliana (Mouse-ear cress), this protein is Subtilisin-like protease SBT3.16.